The following is a 332-amino-acid chain: Hygromycin-B 7''-O-kinase (332 aa).

Asp223 acts as the Proton acceptor in catalysis.

Belongs to the aminoglycoside phosphotransferase family.

The enzyme catalyses hygromycin B + ATP = 7''-O-phosphohygromycin B + ADP + H(+). Functionally, the aminoglycoside phosphotransferases achieve inactivation of their antibiotic substrates by phosphorylation. This is Hygromycin-B 7''-O-kinase (hyg) from Streptomyces hygroscopicus.